Reading from the N-terminus, the 460-residue chain is MFRIVAVPEFSIQTVDARDPSSSEAAETLAALREKLSPRGDLVSPRGRELTLKVFGKALSPIEVVETICKDVQSQGTEALLRYTKSLDGAELTADTLRVPEEDLKAAHAVADPKLIETIGRIRDNIATFQSAILHRDVTITPRPGVSLTQRYVPIPRVGICVPGGAAAYPSTVMMTAIPAQVAGVDEIAVVAPPTPFGAYNTDMLATCHELGIKEVYRCGGAQAVAAMAYGCDALPAVDKIVGPGNLFVALAKKHVFGTVDIDSFAGPSEVIVIADESANAAFVASDLLAQAEHSPGSAILITWDESLLTSVQAELSRQLGELERGDLARDALSDFGALVLARDADHACELTDSFAPEHLQIETREPESLIAKIRHSGAAFLGHHTPVALGDYAAGPSHVLPTGGTCRWAAGLSANSFLRSGSVTQFDQSALSAIAQDVITVAEKEGLTAHARSISIRTE.

Substrate is bound by residues Ser269, Gln291, and His294. Residues Gln291 and His294 each coordinate Zn(2+). Active-site proton acceptor residues include Glu358 and His359. His359, Asp392, Glu446, and His451 together coordinate substrate. Residue Asp392 coordinates Zn(2+). His451 is a Zn(2+) binding site.

This sequence belongs to the histidinol dehydrogenase family. Zn(2+) serves as cofactor.

It catalyses the reaction L-histidinol + 2 NAD(+) + H2O = L-histidine + 2 NADH + 3 H(+). The protein operates within amino-acid biosynthesis; L-histidine biosynthesis; L-histidine from 5-phospho-alpha-D-ribose 1-diphosphate: step 9/9. Its function is as follows. Catalyzes the sequential NAD-dependent oxidations of L-histidinol to L-histidinaldehyde and then to L-histidine. This Rhodopirellula baltica (strain DSM 10527 / NCIMB 13988 / SH1) protein is Histidinol dehydrogenase.